The primary structure comprises 1517 residues: DNA-directed RNA polymerase subunit beta' (1517 aa).

Zn(2+)-binding residues include Cys-71, Cys-73, Cys-86, and Cys-89. The Mg(2+) site is built by Asp-482, Asp-484, and Asp-486. Residues Cys-812, Cys-886, Cys-893, and Cys-896 each coordinate Zn(2+).

This sequence belongs to the RNA polymerase beta' chain family. The RNAP catalytic core consists of 2 alpha, 1 beta, 1 beta' and 1 omega subunit. When a sigma factor is associated with the core the holoenzyme is formed, which can initiate transcription. The cofactor is Mg(2+). Zn(2+) serves as cofactor.

The catalysed reaction is RNA(n) + a ribonucleoside 5'-triphosphate = RNA(n+1) + diphosphate. Its function is as follows. DNA-dependent RNA polymerase catalyzes the transcription of DNA into RNA using the four ribonucleoside triphosphates as substrates. This Campylobacter jejuni subsp. jejuni serotype O:23/36 (strain 81-176) protein is DNA-directed RNA polymerase subunit beta'.